The primary structure comprises 388 residues: Succinate--CoA ligase [ADP-forming] subunit beta (388 aa).

The region spanning 9 to 244 (KQLFAEYGLP…PSQDDAREAH (236 aa)) is the ATP-grasp domain. Residues lysine 46, 53–55 (GRG), glutamate 99, threonine 102, and glutamate 107 each bind ATP. Mg(2+) is bound by residues asparagine 199 and aspartate 213. Residues asparagine 264 and 321 to 323 (GIV) each bind substrate.

Belongs to the succinate/malate CoA ligase beta subunit family. As to quaternary structure, heterotetramer of two alpha and two beta subunits. Mg(2+) serves as cofactor.

It catalyses the reaction succinate + ATP + CoA = succinyl-CoA + ADP + phosphate. The enzyme catalyses GTP + succinate + CoA = succinyl-CoA + GDP + phosphate. It functions in the pathway carbohydrate metabolism; tricarboxylic acid cycle; succinate from succinyl-CoA (ligase route): step 1/1. Functionally, succinyl-CoA synthetase functions in the citric acid cycle (TCA), coupling the hydrolysis of succinyl-CoA to the synthesis of either ATP or GTP and thus represents the only step of substrate-level phosphorylation in the TCA. The beta subunit provides nucleotide specificity of the enzyme and binds the substrate succinate, while the binding sites for coenzyme A and phosphate are found in the alpha subunit. This Pseudomonas entomophila (strain L48) protein is Succinate--CoA ligase [ADP-forming] subunit beta.